A 62-amino-acid polypeptide reads, in one-letter code: DNA-directed RNA polymerase subunit omega (62 aa).

It belongs to the RNA polymerase subunit omega family. In terms of assembly, the RNAP catalytic core consists of 2 alpha, 1 beta, 1 beta' and 1 omega subunit. When a sigma factor is associated with the core the holoenzyme is formed, which can initiate transcription.

The enzyme catalyses RNA(n) + a ribonucleoside 5'-triphosphate = RNA(n+1) + diphosphate. Promotes RNA polymerase assembly. Latches the N- and C-terminal regions of the beta' subunit thereby facilitating its interaction with the beta and alpha subunits. The protein is DNA-directed RNA polymerase subunit omega of Wigglesworthia glossinidia brevipalpis.